The primary structure comprises 363 residues: Glutamate--cysteine ligase (363 aa).

It belongs to the glutamate--cysteine ligase type 2 family. YbdK subfamily.

It catalyses the reaction L-cysteine + L-glutamate + ATP = gamma-L-glutamyl-L-cysteine + ADP + phosphate + H(+). Its function is as follows. Catalyzes the synthesis of gamma-glutamylcysteine (gamma-GC), the main low-molecular-weight thiol compound instead of glutathione in halophilic archaea. This Haloquadratum walsbyi (strain DSM 16790 / HBSQ001) protein is Glutamate--cysteine ligase.